Here is a 476-residue protein sequence, read N- to C-terminus: Tryptophan--tRNA ligase, cytoplasmic (476 aa).

Residues Met1–Ile117 form a dispensable to the catalytic activity region. Residues Ser13 to Pro69 form the WHEP-TRS domain. The disordered stretch occupies residues Tyr63–Thr83. An N6-succinyllysine modification is found at Lys159. Positions Pro169 to His178 match the 'HIGH' region motif. Positions Lys354–Ser358 match the 'KMSKS' region motif. Ser356 carries the phosphoserine modification.

It belongs to the class-I aminoacyl-tRNA synthetase family. As to quaternary structure, homodimer. Interacts with oxidized form of GAPDH. Proteolytic cleavage generates 2 forms; T1-TrpRS and T2-TrpRS.

It localises to the cytoplasm. The catalysed reaction is tRNA(Trp) + L-tryptophan + ATP = L-tryptophyl-tRNA(Trp) + AMP + diphosphate + H(+). T1-TrpRS has aminoacylation activity while T2-TrpRS lacks it. T1-TrpRS and T2-TrpRS possess angiostatic activity. T2-TrpRS inhibits fluid shear stress-activated responses of endothelial cells. Regulates ERK, Akt, and eNOS activation pathways that are associated with angiogenesis, cytoskeletal reorganization and shear stress-responsive gene expression. In Bos taurus (Bovine), this protein is Tryptophan--tRNA ligase, cytoplasmic (WARS1).